The following is a 363-amino-acid chain: Serine/threonine-protein kinase SRK2A (363 aa).

Positions 4-260 constitute a Protein kinase domain; it reads YELVKDIGAG…IAEIKKHSWF (257 aa). ATP is bound by residues 10-18 and Lys-33; that span reads IGAGNFGVA. Residue Asp-123 is the Proton acceptor of the active site. A disordered region spans residues 306–363; sequence SRSIGGFGWGGNGDADGKEEDAEDVEEEEEEVEEEEDDEDEYDKTVKEVHASGEVRIS. Positions 310-319 are enriched in gly residues; sequence GGFGWGGNGD. The segment covering 322 to 347 has biased composition (acidic residues); that stretch reads GKEEDAEDVEEEEEEVEEEEDDEDEY. Residues 348–363 are compositionally biased toward basic and acidic residues; it reads DKTVKEVHASGEVRIS.

This sequence belongs to the protein kinase superfamily. Ser/Thr protein kinase family. As to quaternary structure, interacts with TOPP1. Expressed in seedlings.

It catalyses the reaction L-seryl-[protein] + ATP = O-phospho-L-seryl-[protein] + ADP + H(+). The catalysed reaction is L-threonyl-[protein] + ATP = O-phospho-L-threonyl-[protein] + ADP + H(+). In Arabidopsis thaliana (Mouse-ear cress), this protein is Serine/threonine-protein kinase SRK2A (SRK2A).